Reading from the N-terminus, the 7260-residue chain is Nonribosomal peptide synthetase ecdA (7260 aa).

Residues 4 to 80 form the Carrier 1 domain; sequence TNEMERKRVF…ELFETIQYLQ (77 aa). The residue at position 41 (Ser41) is an O-(pantetheine 4'-phosphoryl)serine. The segment at 134 to 549 is condensation 1; that stretch reads EDVYPSTPLQ…SINEILTLPA (416 aa). Positions 575 to 965 are adenylation 1; it reads QDQVRSQPAA…DGSLLYVGRC (391 aa). In terms of domain architecture, Carrier 2 spans 1090-1166; it reads APSTAIEHKL…DLARELEGRN (77 aa). At Ser1127 the chain carries O-(pantetheine 4'-phosphoryl)serine. The segment at 1208-1628 is condensation 2; the sequence is EDIIPCTAMQ…LGDLSLLSAD (421 aa). Residues 1653-2054 form an adenylation 2 region; it reads EEQITARPDS…GRRDTQIKIR (402 aa). Residues 2188-2264 enclose the Carrier 3 domain; it reads TPSTPTESQL…DLANLLSSRF (77 aa). Ser2225 carries the O-(pantetheine 4'-phosphoryl)serine modification. A condensation 3 region spans residues 2314–2719; sequence QDVYPCTPLQ…THVVQQLCDP (406 aa). An adenylation 3 region spans residues 2763–3156; it reads KQALAQPNAP…GRRDTQVKIR (394 aa). Positions 3287–3365 constitute a Carrier 4 domain; the sequence is QPATEMEKML…ELAQVLEERV (79 aa). O-(pantetheine 4'-phosphoryl)serine is present on Ser3324. The interval 3417–3831 is condensation 4; that stretch reads VQDVYPCTPL…LLSPNDQQQI (415 aa). The interval 3851–4248 is adenylation 4; sequence EEQAMAHPTK…SFVYVARRNT (398 aa). Residues 4394–4471 form the Carrier 5 domain; it reads APATAMERTL…DLANLLADGA (78 aa). Ser4431 carries the O-(pantetheine 4'-phosphoryl)serine modification. The segment at 4510–4910 is condensation 5; sequence EDIYPATPLQ…HFVHVAEQLF (401 aa). The interval 4955 to 5357 is adenylation 5; sequence ERAALQPNAP…GRRDLQVKIR (403 aa). One can recognise a Carrier 6 domain in the interval 5496-5573; the sequence is APRTVMEQQV…DLALVLSERG (78 aa). Position 5533 is an O-(pantetheine 4'-phosphoryl)serine (Ser5533). A condensation 6 region spans residues 5622-6043; the sequence is EDVYPCTPLQ…AVSEKDERQI (422 aa). Residues 6063 to 6460 are adenylation 6; it reads QEQVARTPGE…GRHDSQVKIR (398 aa). The region spanning 6592–6668 is the Carrier 7 domain; that stretch reads APSTAMERQL…EVAQVVEDRV (77 aa). The residue at position 6629 (Ser6629) is an O-(pantetheine 4'-phosphoryl)serine. A condensation 7 region spans residues 6718-7133; sequence LPTTDFQALT…ILDSPGLLVS (416 aa). The disordered stretch occupies residues 7241–7260; the sequence is CEEAEKSASVTSSERRLATI.

Belongs to the NRP synthetase family.

It participates in antifungal biosynthesis. Its function is as follows. Nonribosomal peptide synthetase; part of the gene cluster that mediates the biosynthesis of echinocandin B, a fungal lipidated cyclic hexapeptide that acts as an antifungal agent. Linoleoyl-AMP, produced by the fatty-acyl-AMP ligase ecdI, is transferred to the initiation carrier domain (T0) of ecdA. The linoleoyl-S-phosphopantetheinyl-T0 is sequentially extended with L-ornithine, L-threonine, L-proline, L-homotyrosine, L-threonine, and 4R-methyl-L-proline to form the linear hexapeptide. Thereafter, the terminal condensation (C7) performs macrocyclization of the NRPS product and the cyclic scaffold is released from ecdA. All six of the amino acid residues are hydroxylated, including 4R,5R-dihydroxy-L-ornithine, 4R-hydroxyl-L-proline, 3S,4S-dihydroxy-L-homotyrosine, and 3S-hydroxyl-4S-methyl-L-prolin. In the pathway, all the hydroxylation reactions are proposed to occur following completion of the cyclic peptide, so the unhydroxylated precursor produced by ecdA will undergo six rounds of hydroxylation. Five hydroxylase genes (ecdG, ecdH, ecdK, htyE and htyF) are embedded within the echinocandin B (ecd) and L-homotyrosine (hty) clusters. In Aspergillus rugulosus (Emericella rugulosa), this protein is Nonribosomal peptide synthetase ecdA.